Reading from the N-terminus, the 138-residue chain is ATP synthase epsilon chain (138 aa).

It belongs to the ATPase epsilon chain family. As to quaternary structure, F-type ATPases have 2 components, CF(1) - the catalytic core - and CF(0) - the membrane proton channel. CF(1) has five subunits: alpha(3), beta(3), gamma(1), delta(1), epsilon(1). CF(0) has three main subunits: a, b and c.

It is found in the cell inner membrane. Functionally, produces ATP from ADP in the presence of a proton gradient across the membrane. The protein is ATP synthase epsilon chain of Idiomarina loihiensis (strain ATCC BAA-735 / DSM 15497 / L2-TR).